A 372-amino-acid polypeptide reads, in one-letter code: Chorismate synthase (372 aa).

Arginine 48 serves as a coordination point for NADP(+). FMN is bound by residues 125–127 (RSS), glycine 285, 300–304 (KPTPS), and arginine 327.

This sequence belongs to the chorismate synthase family. Requires FMNH2 as cofactor.

The catalysed reaction is 5-O-(1-carboxyvinyl)-3-phosphoshikimate = chorismate + phosphate. It participates in metabolic intermediate biosynthesis; chorismate biosynthesis; chorismate from D-erythrose 4-phosphate and phosphoenolpyruvate: step 7/7. In terms of biological role, catalyzes the anti-1,4-elimination of the C-3 phosphate and the C-6 proR hydrogen from 5-enolpyruvylshikimate-3-phosphate (EPSP) to yield chorismate, which is the branch point compound that serves as the starting substrate for the three terminal pathways of aromatic amino acid biosynthesis. This reaction introduces a second double bond into the aromatic ring system. In Methanocella arvoryzae (strain DSM 22066 / NBRC 105507 / MRE50), this protein is Chorismate synthase.